We begin with the raw amino-acid sequence, 462 residues long: tRNA(Ile)-lysidine synthase (462 aa).

31 to 36 (SGGRDS) lines the ATP pocket.

Belongs to the tRNA(Ile)-lysidine synthase family.

It is found in the cytoplasm. It carries out the reaction cytidine(34) in tRNA(Ile2) + L-lysine + ATP = lysidine(34) in tRNA(Ile2) + AMP + diphosphate + H(+). Functionally, ligates lysine onto the cytidine present at position 34 of the AUA codon-specific tRNA(Ile) that contains the anticodon CAU, in an ATP-dependent manner. Cytidine is converted to lysidine, thus changing the amino acid specificity of the tRNA from methionine to isoleucine. This is tRNA(Ile)-lysidine synthase from Ralstonia nicotianae (strain ATCC BAA-1114 / GMI1000) (Ralstonia solanacearum).